A 139-amino-acid polypeptide reads, in one-letter code: Acidic phospholipase A2 4 (139 aa).

The signal sequence occupies residues 1-16 (MRTLWIVAVWLVGVEG). 7 disulfides stabilise this stretch: cysteine 42–cysteine 131, cysteine 44–cysteine 60, cysteine 59–cysteine 111, cysteine 65–cysteine 139, cysteine 66–cysteine 104, cysteine 73–cysteine 97, and cysteine 91–cysteine 102. 3 residues coordinate Ca(2+): tyrosine 43, glycine 45, and glycine 47. The active site involves histidine 63. Residue aspartate 64 coordinates Ca(2+). Aspartate 105 is a catalytic residue.

This sequence belongs to the phospholipase A2 family. Group II subfamily. D49 sub-subfamily. Requires Ca(2+) as cofactor. Expressed by the venom gland.

It localises to the secreted. The catalysed reaction is a 1,2-diacyl-sn-glycero-3-phosphocholine + H2O = a 1-acyl-sn-glycero-3-phosphocholine + a fatty acid + H(+). Its function is as follows. PLA2 catalyzes the calcium-dependent hydrolysis of the 2-acyl groups in 3-sn-phosphoglycerides. This is Acidic phospholipase A2 4 from Echis carinatus sochureki (Saw-scaled viper).